The sequence spans 175 residues: Peptide methionine sulfoxide reductase MsrA (175 aa).

Residue C12 is part of the active site.

The protein belongs to the MsrA Met sulfoxide reductase family.

It carries out the reaction L-methionyl-[protein] + [thioredoxin]-disulfide + H2O = L-methionyl-(S)-S-oxide-[protein] + [thioredoxin]-dithiol. It catalyses the reaction [thioredoxin]-disulfide + L-methionine + H2O = L-methionine (S)-S-oxide + [thioredoxin]-dithiol. Functionally, has an important function as a repair enzyme for proteins that have been inactivated by oxidation. Catalyzes the reversible oxidation-reduction of methionine sulfoxide in proteins to methionine. In Limosilactobacillus reuteri (strain DSM 20016) (Lactobacillus reuteri), this protein is Peptide methionine sulfoxide reductase MsrA.